The chain runs to 921 residues: Collagen alpha-1(IX) chain (921 aa).

The N-terminal stretch at 1 to 23 (MKTCWKIPVFFFVCSFLEPWASA) is a signal peptide. The segment at 24–268 (AVKRRPRFPV…ITPSQTTDER (245 aa)) is nonhelical region (NC4). Disulfide bonds link C44/C242 and C198/C252. The 195-residue stretch at 50–244 (GQDDLPGFDL…LQWMLIHCDP (195 aa)) folds into the Laminin G-like domain. N171 carries N-linked (GlcNAc...) asparagine glycosylation. The Zn(2+) site is built by D213, D215, and H253. Disordered regions lie at residues 254–759 (ELPA…APTD) and 783–905 (RPDS…EPAS). Collagen-like domains follow at residues 269-324 (GPPG…TPGA), 325-356 (DGLT…GFPG), 358-403 (GIPG…GTIG), 416-472 (PPGR…GLRG), 473-516 (ITGI…AGPK), 587-643 (EKGS…GKLG), 655-712 (GPPG…GEPG), and 713-755 (LRGP…PPGR). Positions 269 to 405 (GPPGEQGPPG…PGPRGTIGFH (137 aa)) are triple-helical region (COL3). Pro residues-rich tracts occupy residues 273-285 (EQGP…PPGV) and 298-307 (KGPPGPPGPA). Residues 368–383 (TAGLPGELGRVGPVGD) are compositionally biased toward low complexity. Over residues 387–398 (RGPPGPPGPPGP) the composition is skewed to pro residues. Residues 406–417 (DGDPLCPNACPP) form a nonhelical region (NC3) region. Positions 418 to 756 (GRSGYPGLPG…PGVQGPPGRA (339 aa)) are triple-helical region (COL2). The segment covering 479–489 (DKGEKGARGLD) has biased composition (basic and acidic residues). Low complexity-rich tracts occupy residues 602–621 (NSGK…RGPQ) and 630–650 (LGPV…SPGL). Residues 757 to 786 (PTDQHIKQVCMRVIQEHFAEMAASLKRPDS) are nonhelical region (NC2). Residues 787 to 901 (GATGLPGRPG…PGPPGLPGFC (115 aa)) form a triple-helical region (COL1) region. 2 Collagen-like domains span residues 790 to 847 (GLPG…GPPG) and 848 to 899 (RGPN…GLPG). Residues 794-804 (RPGPPGPPGPP) are compositionally biased toward pro residues. Basic and acidic residues predominate over residues 833–845 (PKGDLGEKGERGP). Pro residues predominate over residues 888 to 897 (VPGPPGPPGL). Residues 902–921 (EPASCTMQAGQRAFNKGPDP) form a nonhelical region (NC1) region.

It belongs to the fibril-associated collagens with interrupted helices (FACIT) family. In terms of assembly, heterotrimer of an alpha 1(IX), an alpha 2(IX) and an alpha 3(IX) chain. Post-translationally, covalently linked to the telopeptides of type II collagen by lysine-derived cross-links. In terms of processing, prolines at the third position of the tripeptide repeating unit (G-X-Y) are hydroxylated in some or all of the chains.

The protein resides in the secreted. The protein localises to the extracellular space. It is found in the extracellular matrix. In terms of biological role, structural component of hyaline cartilage and vitreous of the eye. This Homo sapiens (Human) protein is Collagen alpha-1(IX) chain (COL9A1).